An 80-amino-acid chain; its full sequence is Transcription elongation factor 1 homolog (80 aa).

Zn(2+)-binding residues include cysteine 25, cysteine 28, cysteine 49, and cysteine 52.

Belongs to the ELOF1 family.

The protein localises to the nucleus. In terms of biological role, transcription elongation factor implicated in the maintenance of proper chromatin structure in actively transcribed regions. The sequence is that of Transcription elongation factor 1 homolog from Encephalitozoon cuniculi (strain GB-M1) (Microsporidian parasite).